The sequence spans 388 residues: Protein TsgA homolog (388 aa).

The next 12 membrane-spanning stretches (helical) occupy residues 12 to 32 (CISF…GIFL), 51 to 71 (TFLN…TNII), 77 to 97 (LIFG…SHNL), 102 to 122 (ISMF…TYII), 137 to 157 (LTDS…ALII), 163 to 183 (WYWV…ITIN), 203 to 223 (FSIL…LSFI), 246 to 266 (SAFW…LKFF), 272 to 292 (IITL…FYDY), 294 to 314 (LLYI…TIII), 331 to 351 (YILT…GPIV), and 356 to 376 (IFSA…LVII).

It belongs to the major facilitator superfamily. TsgA family.

The protein resides in the cell membrane. The chain is Protein TsgA homolog from Buchnera aphidicola subsp. Baizongia pistaciae (strain Bp).